The sequence spans 150 residues: Transcriptional repressor NrdR (150 aa).

A zinc finger lies at 3-34; that stretch reads CPFCAFADSKVVDSRPDKGGSTIRRRRECESC. Residues 49-139 enclose the ATP-cone domain; that stretch reads PLVIKKDGRR…VYRSFKDITE (91 aa).

It belongs to the NrdR family. Zn(2+) is required as a cofactor.

In terms of biological role, negatively regulates transcription of bacterial ribonucleotide reductase nrd genes and operons by binding to NrdR-boxes. The sequence is that of Transcriptional repressor NrdR from Geotalea uraniireducens (strain Rf4) (Geobacter uraniireducens).